A 434-amino-acid chain; its full sequence is Enolase (434 aa).

Gln-163 contributes to the (2R)-2-phosphoglycerate binding site. The active-site Proton donor is the Glu-205. Mg(2+)-binding residues include Asp-242, Glu-289, and Asp-316. (2R)-2-phosphoglycerate-binding residues include Lys-341, Arg-370, Ser-371, and Lys-392. Lys-341 serves as the catalytic Proton acceptor.

It belongs to the enolase family. Requires Mg(2+) as cofactor.

The protein resides in the cytoplasm. It localises to the secreted. It is found in the cell surface. The catalysed reaction is (2R)-2-phosphoglycerate = phosphoenolpyruvate + H2O. It participates in carbohydrate degradation; glycolysis; pyruvate from D-glyceraldehyde 3-phosphate: step 4/5. Functionally, catalyzes the reversible conversion of 2-phosphoglycerate (2-PG) into phosphoenolpyruvate (PEP). It is essential for the degradation of carbohydrates via glycolysis. This chain is Enolase, found in Lacticaseibacillus paracasei (strain ATCC 334 / BCRC 17002 / CCUG 31169 / CIP 107868 / KCTC 3260 / NRRL B-441) (Lactobacillus paracasei).